A 116-amino-acid polypeptide reads, in one-letter code: Large ribosomal subunit protein bL20c (116 aa).

Belongs to the bacterial ribosomal protein bL20 family.

The protein resides in the plastid. It localises to the chloroplast. Functionally, binds directly to 23S ribosomal RNA and is necessary for the in vitro assembly process of the 50S ribosomal subunit. It is not involved in the protein synthesizing functions of that subunit. This Ipomoea purpurea (Common morning glory) protein is Large ribosomal subunit protein bL20c.